We begin with the raw amino-acid sequence, 155 residues long: Non-secretory ribonuclease (155 aa).

The first 25 residues, 1–25 (MGPKLLESRLCLLLLLGLVLMLASC), serve as a signal peptide directing secretion. K33 serves as a coordination point for substrate. Catalysis depends on H38, which acts as the Proton acceptor. Residue N41 is glycosylated (N-linked (GlcNAc...) asparagine). 4 cysteine pairs are disulfide-bonded: C47-C106, C61-C118, C79-C133, and C86-C94. Y57 is subject to 3'-nitrotyrosine. 62–66 (KDINT) lines the substrate pocket. 3 N-linked (GlcNAc...) asparagine glycosylation sites follow: N83, N88, and N107. The active-site Proton donor is the H150.

The protein belongs to the pancreatic ribonuclease family. In terms of assembly, interacts with and forms a tight 1:1 complex with RNH1. Dimerization of two such complexes may occur.

Its subcellular location is the lysosome. The protein localises to the cytoplasmic granule. The catalysed reaction is an [RNA] containing cytidine + H2O = an [RNA]-3'-cytidine-3'-phosphate + a 5'-hydroxy-ribonucleotide-3'-[RNA].. The enzyme catalyses an [RNA] containing uridine + H2O = an [RNA]-3'-uridine-3'-phosphate + a 5'-hydroxy-ribonucleotide-3'-[RNA].. This is a non-secretory ribonuclease. It is a pyrimidine specific nuclease with a slight preference for U. Cytotoxin and helminthotoxin. Possesses a wide variety of biological activities. This is Non-secretory ribonuclease (Rnase2) from Mus musculus (Mouse).